The chain runs to 215 residues: Probable transaldolase (215 aa).

K83 functions as the Schiff-base intermediate with substrate in the catalytic mechanism.

The protein belongs to the transaldolase family. Type 3B subfamily.

It is found in the cytoplasm. The catalysed reaction is D-sedoheptulose 7-phosphate + D-glyceraldehyde 3-phosphate = D-erythrose 4-phosphate + beta-D-fructose 6-phosphate. Its pathway is carbohydrate degradation; pentose phosphate pathway; D-glyceraldehyde 3-phosphate and beta-D-fructose 6-phosphate from D-ribose 5-phosphate and D-xylulose 5-phosphate (non-oxidative stage): step 2/3. In terms of biological role, transaldolase is important for the balance of metabolites in the pentose-phosphate pathway. The protein is Probable transaldolase of Clostridium perfringens (strain SM101 / Type A).